The chain runs to 298 residues: Protease HtpX homolog (298 aa).

A run of 2 helical transmembrane segments spans residues 16–36 and 38–58; these read VMFGFGVLTLAIGAALGYLFW and SWVSGTVIAAVVAVVYMLIMI. Zn(2+) is bound at residue His-144. Glu-145 is an active-site residue. His-148 serves as a coordination point for Zn(2+). A run of 2 helical transmembrane segments spans residues 159–179 and 197–217; these read IALALSAAIGLLVNFASNWFW and IIGLVISIFLIILAPLAASIA. A Zn(2+)-binding site is contributed by Glu-226.

This sequence belongs to the peptidase M48B family. The cofactor is Zn(2+).

The protein resides in the cell membrane. The polypeptide is Protease HtpX homolog (Levilactobacillus brevis (strain ATCC 367 / BCRC 12310 / CIP 105137 / JCM 1170 / LMG 11437 / NCIMB 947 / NCTC 947) (Lactobacillus brevis)).